The following is a 334-amino-acid chain: N-acetyl-gamma-glutamyl-phosphate reductase (334 aa).

Residue Cys-154 is part of the active site.

It belongs to the NAGSA dehydrogenase family. Type 1 subfamily.

It localises to the cytoplasm. It carries out the reaction N-acetyl-L-glutamate 5-semialdehyde + phosphate + NADP(+) = N-acetyl-L-glutamyl 5-phosphate + NADPH + H(+). Its pathway is amino-acid biosynthesis; L-arginine biosynthesis; N(2)-acetyl-L-ornithine from L-glutamate: step 3/4. In terms of biological role, catalyzes the NADPH-dependent reduction of N-acetyl-5-glutamyl phosphate to yield N-acetyl-L-glutamate 5-semialdehyde. The sequence is that of N-acetyl-gamma-glutamyl-phosphate reductase from Escherichia coli (strain K12).